A 252-amino-acid chain; its full sequence is Vacuolar iron transporter 1 (252 aa).

Over 1 to 38 (MAAATDGGGLPLLADKAASHSHHHHPERHFTSGEVVRD) the chain is Cytoplasmic. Residues 39–59 (VIMGVSDGLTVPFALAAGLSG) traverse the membrane as a helical segment. Residues 60–65 (ASAPSS) lie on the Vacuolar side of the membrane. A helical transmembrane segment spans residues 66 to 86 (LVLTAGLAEVAAGAISMGLGG). Residues 87 to 170 (YLAAKSEADH…PDPKRAIQSA (84 aa)) are Cytoplasmic-facing. The segment at 92–167 (SEADHYQREM…LEKPDPKRAI (76 aa)) is cytoplasmic metal binding domain (MBD). Residues glutamate 104, glutamate 107, glutamate 115, glutamate 118, methionine 151, and glutamate 155 each contribute to the Fe cation site. The chain crosses the membrane as a helical span at residues 171–191 (LTIALSYVIGGLVPLLPYMFI). Over 192-196 (STAQN) the chain is Vacuolar. The helical transmembrane segment at 197–217 (AMLTSVGVTLVALLFFGYIKG) threads the bilayer. Over 218 to 224 (RFTGNRP) the chain is Cytoplasmic. Residues 225 to 245 (FLSAVQTAIIGALASAAAYGM) form a helical membrane-spanning segment. Residues 246–252 (AKAVQTR) lie on the Vacuolar side of the membrane.

This sequence belongs to the CCC1 family. Homodimer. The dimeric interaction is mediated by both the transmembrane domains (TMDs) and the cytoplasmic metal binding domain (MBD). In terms of tissue distribution, highly expressed in leaf blades. Expressed in leaf sheaths.

Its subcellular location is the vacuole membrane. The catalysed reaction is Fe(2+)(in) = Fe(2+)(out). Vacuolar iron transporter involved in the transfer of iron ions from the cytosol to the vacuole for intracellular iron storage. Vacuolar iron storage is required for seed embryo and seedling development. May be involved in the regulation of iron translocation between flag leaves and seeds. Can transport zinc ions from the cytosol to the vacuole. This chain is Vacuolar iron transporter 1, found in Oryza sativa subsp. japonica (Rice).